A 66-amino-acid polypeptide reads, in one-letter code: Potassium channel toxin alpha-KTx (66 aa).

Positions 1–21 (MNTKVVLIMLMITSVILVVEA) are cleaved as a signal peptide. 4 disulfides stabilise this stretch: Cys29–Cys49, Cys35–Cys59, Cys39–Cys61, and Cys44–Cys64.

This sequence belongs to the short scorpion toxin superfamily. Potassium channel inhibitor family. Expressed by the venom gland.

The protein localises to the secreted. Its function is as follows. Blocks voltage-gated potassium channels. In Hoffmannihadrurus gertschi (Scorpion), this protein is Potassium channel toxin alpha-KTx.